The primary structure comprises 258 residues: Small ribosomal subunit protein mS23 (258 aa).

The protein belongs to the mitochondrion-specific ribosomal protein mS23 family. As to quaternary structure, component of the mitochondrial small ribosomal subunit.

Its subcellular location is the mitochondrion. The protein is Small ribosomal subunit protein mS23 of Aspergillus fumigatus (strain CBS 144.89 / FGSC A1163 / CEA10) (Neosartorya fumigata).